Here is a 309-residue protein sequence, read N- to C-terminus: Carbonic anhydrase 4 (309 aa).

A signal peptide spans 1-17; the sequence is MQLLLALLALAYVAPST. Residues 20-282 form the Alpha-carbonic anhydrase domain; that stretch reads SHWCYEIQAK…LGNRQVFRSH (263 aa). Intrachain disulfides connect Cys-23–Cys-35 and Cys-45–Cys-226. Catalysis depends on His-87, which acts as the Proton donor/acceptor. The Zn(2+) site is built by His-114, His-116, and His-139. Asn-193 carries N-linked (GlcNAc...) asparagine glycosylation. 222–223 is a binding site for substrate; it reads TT. Ser-281 carries the GPI-anchor amidated serine lipid modification. A propeptide spans 282–309 (removed in mature form); the sequence is HASGRLLSLPLPTLLVPTLTCLVASFLH.

The protein belongs to the alpha-carbonic anhydrase family. Interacts with SLC4A4. Zn(2+) serves as cofactor. Post-translationally, the N-terminus is blocked. In terms of processing, glycosylated. In terms of tissue distribution, present in kidney and lung. Also particularly abundant in brain, muscle, heart and liver. Not detected in skin or spleen.

The protein localises to the cell membrane. It carries out the reaction hydrogencarbonate + H(+) = CO2 + H2O. Inhibited by acetazolamide. Catalyzes the reversible hydration of carbon dioxide into bicarbonate and protons and thus is essential to maintaining intracellular and extracellular pH. May stimulate the sodium/bicarbonate transporter activity of SLC4A4 that acts in pH homeostasis. It is essential for acid overload removal from the retina and retina epithelium, and acid release in the choriocapillaris in the choroid. This is Carbonic anhydrase 4 (Ca4) from Rattus norvegicus (Rat).